A 117-amino-acid polypeptide reads, in one-letter code: Holo-[acyl-carrier-protein] synthase (117 aa).

Residues aspartate 6 and glutamate 55 each coordinate Mg(2+).

Belongs to the P-Pant transferase superfamily. AcpS family. Requires Mg(2+) as cofactor.

The protein localises to the cytoplasm. The enzyme catalyses apo-[ACP] + CoA = holo-[ACP] + adenosine 3',5'-bisphosphate + H(+). Transfers the 4'-phosphopantetheine moiety from coenzyme A to a Ser of acyl-carrier-protein. This is Holo-[acyl-carrier-protein] synthase from Chlorobaculum parvum (strain DSM 263 / NCIMB 8327) (Chlorobium vibrioforme subsp. thiosulfatophilum).